The chain runs to 374 residues: 2-oxoglutarate-Fe(II) type oxidoreductase ppzC (374 aa).

The disordered stretch occupies residues 111 to 131; it reads KKGPFDSGYRGPGTQRVNPDE. Residues 220 to 330 enclose the Fe2OG dioxygenase domain; sequence YPDASLEINF…RVSMPFFWGF (111 aa). Residues H254, D256, and H311 each contribute to the Fe cation site. R321 provides a ligand contact to 2-oxoglutarate.

The protein belongs to the iron/ascorbate-dependent oxidoreductase family. Fe(2+) is required as a cofactor.

The enzyme catalyses peramine + 2-oxoglutarate + O2 = 8-hydroxyperamine + succinate + CO2. Its pathway is secondary metabolite biosynthesis. Functionally, 2-oxoglutarate-Fe(II) type oxidoreductase; part of the gene cluster that mediates the biosynthesis of pyrrolopyrazines, secondary metabolites showing insecticidal activity. Within the pathway, ppzC uses peramine as substrate for hydroxylation to yield the novel analog 8-hydroxyperamine. The single multifunctional NRPS ppzA is sufficient to produce peramine via condensation of 1-pyrroline-5-carboxylate and arginine, N-methylation of the alpha-amino group of arginine and reduction of the thioester and the cyclization to form an iminium ion resulting in release from the peptide synthetase. Deprotonation of this intermediate and oxidation of the pyrroline ring would give rise to peramine. In Epichloe species that produce only peramine, the peramine synthetase gene is not localized in a gene cluster, in contrast to Metarhizium species that contain additional pyrrolopyrazine biosynthesis genes. The 2-oxoglutarate-Fe(II) type oxidoreductase ppzC hydroxylates peramine to yield the newly identified compound 8-hydroxyperamine whereas ppzD converts L-proline into trans-4-hydroxy-L-proline, a precursor of peramine biosynthesis. This chain is 2-oxoglutarate-Fe(II) type oxidoreductase ppzC (ppzC), found in Metarhizium majus (strain ARSEF 297).